The primary structure comprises 138 residues: MAKPILRVGSRKNTRSASRKNVRKIPKGVIHVQASFNNTIVTVTDVRGRVISWSSAGTCGFRGTRRGTPFAAQTAAGNAIRAVVDQGMQRAEVRIKGPGLGRDAALRAIRRSGILLSFVRDVTPMPHNGCRPPKKRRV.

Residues 1–22 are disordered; the sequence is MAKPILRVGSRKNTRSASRKNV. Positions 9-22 are enriched in basic residues; sequence GSRKNTRSASRKNV.

The protein belongs to the universal ribosomal protein uS11 family. Part of the 30S ribosomal subunit.

It localises to the plastid. The protein resides in the chloroplast. In Draba nemorosa (Woodland whitlowgrass), this protein is Small ribosomal subunit protein uS11c.